A 120-amino-acid chain; its full sequence is Cytochrome c oxidase subunit 5 (120 aa).

Blocked amino end (Ser) is present on serine 2. Residues cysteine 76, histidine 84, cysteine 99, and cysteine 102 each coordinate Zn(2+).

It belongs to the cytochrome c oxidase subunit 5B family. In terms of assembly, component of the cytochrome c oxidase (complex IV, CIV), a multisubunit enzyme composed of a catalytic core of 3 subunits and several supernumerary subunits. The complex exists as a monomer or a dimer and forms supercomplexes (SCs) in the inner mitochondrial membrane with ubiquinol-cytochrome c oxidoreductase (cytochrome b-c1 complex, complex III, CIII). Slime mold cytochrome c oxidase consists of at least seven different polypeptides species, subunits I, II, III, IV, V, VI, and VIIe/s in order of MW.

The protein resides in the mitochondrion inner membrane. It functions in the pathway energy metabolism; oxidative phosphorylation. Functionally, component of the cytochrome c oxidase, the last enzyme in the mitochondrial electron transport chain which drives oxidative phosphorylation. The respiratory chain contains 3 multisubunit complexes succinate dehydrogenase (complex II, CII), ubiquinol-cytochrome c oxidoreductase (cytochrome b-c1 complex, complex III, CIII) and cytochrome c oxidase (complex IV, CIV), that cooperate to transfer electrons derived from NADH and succinate to molecular oxygen, creating an electrochemical gradient over the inner membrane that drives transmembrane transport and the ATP synthase. Cytochrome c oxidase is the component of the respiratory chain that catalyzes the reduction of oxygen to water. Electrons originating from reduced cytochrome c in the intermembrane space (IMS) are transferred via the dinuclear copper A center (CU(A)) of subunit 2 and heme A of subunit 1 to the active site in subunit 1, a binuclear center (BNC) formed by heme A3 and copper B (CU(B)). The BNC reduces molecular oxygen to 2 water molecules using 4 electrons from cytochrome c in the IMS and 4 protons from the mitochondrial matrix. The sequence is that of Cytochrome c oxidase subunit 5 (cxeA) from Dictyostelium discoideum (Social amoeba).